Consider the following 212-residue polypeptide: Amelotin (212 aa).

Residues Met-1–Ser-16 form the signal peptide. Disordered stretches follow at residues Pro-23–Gln-42 and Pro-141–Lys-212. Polar residues-rich tracts occupy residues Thr-33 to Gln-42 and Pro-165 to Ala-178.

Belongs to the amelotin family. Post-translationally, O-glycosylated. In terms of processing, phosphorylated by FAM20C in vitro. In terms of tissue distribution, highest expression in the mandible. Found in the basal lamina of maturation stage ameloblasts of incisors and unerupted molars. Also found in the internal basal lamina of junctional epithelium in molars.

The protein resides in the secreted. Is a promoter of calcium phosphate mineralization, playing a critical role in the formation of the compact, mineralized, aprismatic enamel surface layer during the maturation stage of amelogenesis. The chain is Amelotin from Rattus norvegicus (Rat).